We begin with the raw amino-acid sequence, 311 residues long: Putative dihydroorotate dehydrogenase A (fumarate) (311 aa).

Substrate is bound by residues K45, 69–73, and N128; that span reads NSMGL. 45-46 contacts FMN; that stretch reads KT. N128 is an FMN binding site. C131 acts as the Nucleophile in catalysis. K165 and V193 together coordinate FMN. A substrate-binding site is contributed by 194–195; the sequence is NS. FMN is bound by residues G220, 248 to 249, and 270 to 271; these read GG and GT.

Belongs to the dihydroorotate dehydrogenase family. Type 1 subfamily. Homodimer. It depends on FMN as a cofactor.

Its subcellular location is the cytoplasm. It carries out the reaction (S)-dihydroorotate + fumarate = orotate + succinate. It participates in pyrimidine metabolism; UMP biosynthesis via de novo pathway. Functionally, catalyzes the conversion of dihydroorotate to orotate with fumarate as the electron acceptor. This chain is Putative dihydroorotate dehydrogenase A (fumarate) (pyrD), found in Streptococcus pyogenes serotype M3 (strain SSI-1).